Consider the following 432-residue polypeptide: Gamma-glutamyl phosphate reductase (432 aa).

It belongs to the gamma-glutamyl phosphate reductase family.

It is found in the cytoplasm. The catalysed reaction is L-glutamate 5-semialdehyde + phosphate + NADP(+) = L-glutamyl 5-phosphate + NADPH + H(+). The protein operates within amino-acid biosynthesis; L-proline biosynthesis; L-glutamate 5-semialdehyde from L-glutamate: step 2/2. Functionally, catalyzes the NADPH-dependent reduction of L-glutamate 5-phosphate into L-glutamate 5-semialdehyde and phosphate. The product spontaneously undergoes cyclization to form 1-pyrroline-5-carboxylate. This is Gamma-glutamyl phosphate reductase from Kineococcus radiotolerans (strain ATCC BAA-149 / DSM 14245 / SRS30216).